We begin with the raw amino-acid sequence, 636 residues long: Chaperone protein DnaK (636 aa).

Threonine 197 carries the post-translational modification Phosphothreonine; by autocatalysis. Over residues 596-607 (LYQQAQEQQQSG) the composition is skewed to low complexity. Residues 596–636 (LYQQAQEQQQSGSSGGSSDEDVVEDAEIVDEEDEEKRDDNR) are disordered. Over residues 613–636 (SDEDVVEDAEIVDEEDEEKRDDNR) the composition is skewed to acidic residues.

The protein belongs to the heat shock protein 70 family.

Acts as a chaperone. The protein is Chaperone protein DnaK of Rubrobacter xylanophilus (strain DSM 9941 / JCM 11954 / NBRC 16129 / PRD-1).